The following is a 290-amino-acid chain: 33 kDa chaperonin (290 aa).

2 disulfide bridges follow: Cys235–Cys237 and Cys268–Cys271.

It belongs to the HSP33 family. In terms of processing, under oxidizing conditions two disulfide bonds are formed involving the reactive cysteines. Under reducing conditions zinc is bound to the reactive cysteines and the protein is inactive.

It localises to the cytoplasm. Redox regulated molecular chaperone. Protects both thermally unfolding and oxidatively damaged proteins from irreversible aggregation. Plays an important role in the bacterial defense system toward oxidative stress. The chain is 33 kDa chaperonin from Streptococcus pyogenes serotype M49 (strain NZ131).